A 437-amino-acid chain; its full sequence is MRRSSRPGSASSSRKHTPNFFSENSSMSITSEDSKGLRSAEPGPGEPEGRRARGPSCGEPALSAGVPGGTTWAGSSQQKPAPRSHNWQTACGAATVRGGASEPTGSPVVSEEPLDLLPTLDLRQEMPPPRVFKSFLSLLFQGLSVLLSLAGDVLVSMYREVCSIRFLFTAVSLLSLFLSAFWLGLLYLVSPLENEPKEMLTLSEYHERVRSQGQQLQQLQAELDKLHKEVSTVRAANSERVAKLVFQRLNEDFVRKPDYALSSVGASIDLQKTSHDYADRNTAYFWNRFSFWNYARPPTVILEPHVFPGNCWAFEGDQGQVVIQLPGRVQLSDITLQHPPPSVEHTGGANSAPRDFAVFGLQVYDETEVSLGKFTFDVEKSEIQTFHLQNDPPAAFPKVKIQILSNWGHPRFTCLYRVRAHGVRTSEGAEGSAQGPH.

Over residues 1 to 12 the composition is skewed to low complexity; the sequence is MRRSSRPGSASS. Positions 1–88 are disordered; sequence MRRSSRPGSA…KPAPRSHNWQ (88 aa). 2 stretches are compositionally biased toward polar residues: residues 19 to 31 and 72 to 88; these read NFFS…SITS and WAGS…HNWQ. 2 consecutive transmembrane segments (helical) span residues 135–155 and 166–186; these read FLSL…DVLV and FLFT…LGLL. The stretch at 197-244 forms a coiled coil; the sequence is KEMLTLSEYHERVRSQGQQLQQLQAELDKLHKEVSTVRAANSERVAKL. The SUN domain maps to 265–425; the sequence is GASIDLQKTS…YRVRAHGVRT (161 aa).

As to quaternary structure, homodimer. Interacts with ODF1. May associate with microtubules. Interacts with SUN3 and SYNE1; suggesting the formation of a spermatogenesis-specific LINC complex; a SUN domain-based heterotrimer with SUN3 may associate with SYNE1. Interacts with SEPT12 and LMNB1; during spermatogenesis. As to expression, predominantly epressed in testis. Expressed in ejaculated spermatozoa (at protein level).

The protein localises to the membrane. It localises to the cytoplasm. The protein resides in the cytoskeleton. Its subcellular location is the flagellum axoneme. It is found in the nucleus envelope. The protein localises to the nucleus inner membrane. Its function is as follows. Involved in spermatogenesis. Required for sperm head formation but not required to establish and maintain general polarity of the sperm head. Required for anchoring and organization of the manchette. Required for targeting of SUN3 and probably SYNE1 through a probable SUN1:SYNE3 LINC complex to the nuclear envelope and involved in accurate posterior sperm head localization of the complex. May anchor SUN3 the nuclear envelope. Involved in maintenance of the nuclear envelope integrity. May assist the organization and assembly of outer dense fibers (ODFs), a specific structure of the sperm tail. This Homo sapiens (Human) protein is Sperm-associated antigen 4 protein (SPAG4).